Here is a 686-residue protein sequence, read N- to C-terminus: Cyclic nucleotide-gated channel alpha-1 (686 aa).

Residues 1–165 (MKNNIINTQQ…PSGNTYYNWL (165 aa)) are Cytoplasmic-facing. 2 disordered regions span residues 31 to 75 (ENGA…PSQR) and 87 to 149 (NVNN…EEKK). Acidic residues predominate over residues 39 to 53 (SEDDDSASTSEESEN). A compositionally biased stretch (basic and acidic residues) spans 110–124 (SKSDDKNENKNDPEK). Residues 125–134 (KKKKKDKEKK) are compositionally biased toward basic residues. Residues 135 to 149 (KKEEKSKDKKEEEKK) show a composition bias toward basic and acidic residues. A helical membrane pass occupies residues 166–187 (FCITLPVMYNWTMVIARACFDE). The Extracellular portion of the chain corresponds to 188–197 (LQSDYLEYWL). A helical membrane pass occupies residues 198–218 (ILDYVSDIVYLIDMFVRTRTG). Residues 219–243 (YLEQGLLVKEELKLINKYKSNLQFK) lie on the Cytoplasmic side of the membrane. Residues 244–262 (LDVLSLIPTDLLYFKLGWN) form a helical membrane-spanning segment. Residues 263–267 (YPEIR) are Extracellular-facing. The helical transmembrane segment at 268-286 (LNRLLRFSRMFEFFQRTET) threads the bilayer. Topologically, residues 287–293 (RTNYPNI) are cytoplasmic. The tract at residues 291–399 (PNIFRISNLV…GNIGSMISNM (109 aa)) is ion conduction pathway. Residues 294–317 (FRISNLVMYIVIIIHWNACVFYSI) traverse the membrane as a helical segment. Topologically, residues 318–340 (SKAIGFGNDTWVYPDINDPEFGR) are extracellular. N-linked (GlcNAc...) asparagine glycosylation occurs at asparagine 325. 2 helical membrane passes run 341 to 375 (LARK…VFVV) and 376 to 400 (VDFL…SNMN). The interval 358 to 361 (TIGE) is selectivity filter. The interval 401–477 (AARAEFQARI…DTLKKVRIFA (77 aa)) is C-linker. The Cytoplasmic portion of the chain corresponds to 401 to 686 (AARAEFQARI…GAESGPIDST (286 aa)). The interval 481–601 (AGLLVELVLK…EEKGKQILMK (121 aa)) is cyclic nucleotide-binding domain. 3',5'-cyclic GMP-binding residues include glycine 541, serine 544, arginine 557, and threonine 558. 3',5'-cyclic AMP is bound by residues arginine 557 and threonine 558. Residues 619 to 673 (LEEKVTRMEGSVDLLQTRFARILAEYESMQQKLKQRLTKVEKFLKPLIDTEFSSI) are a coiled coil.

It belongs to the cyclic nucleotide-gated cation channel (TC 1.A.1.5) family. CNGA1 subfamily. As to quaternary structure, forms heterotetrameric channels composed of CNGA1 and CNGB1 subunits with 3:1 stoichiometry. May also form cyclic nucleotide-activated homotetrameric channels, that are efficiently activated by saturating cGMP, but poorly activated by saturating cAMP compared to the heterotetramer with CNGB1. The channel binds Ca(2+)-bound CALM1 via CaM1 and CaM2 regions of the CNGB1 subunit; this interaction modulates the affinity of the channel for cNMPs in response to intracellular Ca(2+) levels. As to expression, rod cells in the retina.

The protein resides in the cell membrane. The enzyme catalyses Ca(2+)(in) = Ca(2+)(out). The catalysed reaction is Na(+)(in) = Na(+)(out). It catalyses the reaction K(+)(in) = K(+)(out). It carries out the reaction NH4(+)(in) = NH4(+)(out). The enzyme catalyses Rb(+)(in) = Rb(+)(out). The catalysed reaction is Li(+)(in) = Li(+)(out). It catalyses the reaction Cs(+)(in) = Cs(+)(out). With respect to regulation, channel opening is activated by cGMP and at a much lesser extent by cAMP. Ca(2+) binding concominantly blocks monovalent cation currents. Inhibited by L-cis-diltiazem. In terms of biological role, pore-forming subunit of the rod cyclic nucleotide-gated channel. Mediates rod photoresponses at dim light converting transient changes in intracellular cGMP levels into electrical signals. In the dark, cGMP levels are high and keep the channel open enabling a steady inward current carried by Na(+) and Ca(2+) ions that leads to membrane depolarization and neurotransmitter release from synaptic terminals. Upon photon absorption cGMP levels decline leading to channel closure and membrane hyperpolarization that ultimately slows neurotransmitter release and signals the presence of light, the end point of the phototransduction cascade. Conducts cGMP- and cAMP-gated ion currents, with permeability for monovalent and divalent cations. The selectivity for Ca(2+) over Na(+) increases with cGMP concentrations, whereas the selectivity among monovalent ions is independent of the cGMP levels. This Homo sapiens (Human) protein is Cyclic nucleotide-gated channel alpha-1.